The following is a 67-amino-acid chain: Surface composition regulator (67 aa).

Belongs to the GlgS family.

In terms of biological role, major determinant of cell surface composition. Negatively regulates motility, adhesion and synthesis of biofilm exopolysaccharides. In Salmonella enteritidis PT4 (strain P125109), this protein is Surface composition regulator.